Reading from the N-terminus, the 152-residue chain is UPF0178 protein SAB0630c (152 aa).

The protein belongs to the UPF0178 family.

The sequence is that of UPF0178 protein SAB0630c from Staphylococcus aureus (strain bovine RF122 / ET3-1).